Reading from the N-terminus, the 101-residue chain is UPF0473 protein SUB1774 (101 aa).

Belongs to the UPF0473 family.

This is UPF0473 protein SUB1774 from Streptococcus uberis (strain ATCC BAA-854 / 0140J).